We begin with the raw amino-acid sequence, 202 residues long: Glycerol-3-phosphate acyltransferase (202 aa).

Transmembrane regions (helical) follow at residues 3-23 (NLII…LILT), 61-81 (IATI…LKFL), 87-107 (LLWS…YLLF), 117-137 (AGAM…VWAV), 144-164 (ISSL…FIFN), and 167-187 (LEIH…YKHL).

The protein belongs to the PlsY family. In terms of assembly, probably interacts with PlsX.

Its subcellular location is the cell inner membrane. The enzyme catalyses an acyl phosphate + sn-glycerol 3-phosphate = a 1-acyl-sn-glycero-3-phosphate + phosphate. The protein operates within lipid metabolism; phospholipid metabolism. Its function is as follows. Catalyzes the transfer of an acyl group from acyl-phosphate (acyl-PO(4)) to glycerol-3-phosphate (G3P) to form lysophosphatidic acid (LPA). This enzyme utilizes acyl-phosphate as fatty acyl donor, but not acyl-CoA or acyl-ACP. The polypeptide is Glycerol-3-phosphate acyltransferase (Campylobacter jejuni subsp. doylei (strain ATCC BAA-1458 / RM4099 / 269.97)).